The sequence spans 796 residues: Probable phosphoketolase 2 (796 aa).

The protein belongs to the XFP family. It depends on thiamine diphosphate as a cofactor.

This is Probable phosphoketolase 2 from Lactiplantibacillus plantarum (strain ATCC BAA-793 / NCIMB 8826 / WCFS1) (Lactobacillus plantarum).